The chain runs to 314 residues: Small ribosomal subunit protein uS2 (314 aa).

2 stretches are compositionally biased toward basic and acidic residues: residues 244–265 (GGHD…GHKD) and 271–287 (DRRG…EDRA). The interval 244–314 (GGHDERREQE…AAPEAAPAKE (71 aa)) is disordered. Residues 302–314 (APAAAPEAAPAKE) are compositionally biased toward low complexity.

This sequence belongs to the universal ribosomal protein uS2 family.

The chain is Small ribosomal subunit protein uS2 from Anaeromyxobacter dehalogenans (strain 2CP-C).